The following is a 521-amino-acid chain: MEFFLDPSTWAGLLTLVILEVVLGIDNLIFVAILSEKLPPNQRDKARLIGLGLALVMRLALLSLISWIVTLNSPIVHNKFFSLSIRDIILLFGGFFLLFKTTMELHERLENNHHENSENKNYAGFWAVVIQIVVLDAVFSLDAIITAVGMVNQLLIMMIAVILATFLMLLASKALTNFINLHQTVVVLCLSFLLMIGFSLVTEALRFCIPKGYLYAAIGFSILIEIFNQIARHNFMKNQSRRPMRQRAAEAILRLMVGEQNKKQQIKKIEINSQKTDSIQSSKEMETFKDEERYMINGVLTLAGRSIRSIMTPRSNISWVNTEKNTDEIRMQLLDTPHSLFPVCKGELDEIIGIVRAKELLVAIEKKIDASTFSSKILPIIIPDTLDPIKLLGVLRRAQGSFVIVSNEFGVVQGLITPLDVLEAIAGEFPDADETPDIIQENNSWLVKGETDLHSLQQLLNTEELIKEDNYASLGGLLIAQKGQLPIPGEIIHIHPFYFHIVKATEYRIDLVRIIKNQDDN.

A run of 7 helical transmembrane segments spans residues 13 to 33 (LLTLVILEVVLGIDNLIFVAI), 49 to 69 (IGLGLALVMRLALLSLISWIV), 80 to 100 (FFSLSIRDIILLFGGFFLLFK), 125 to 145 (FWAVVIQIVVLDAVFSLDAII), 150 to 170 (MVNQLLIMMIAVILATFLMLL), 185 to 205 (VVVLCLSFLLMIGFSLVTEAL), and 207 to 227 (FCIPKGYLYAAIGFSILIEIF). CBS domains are found at residues 311 to 370 (MTPR…KIDA) and 374 to 434 (SSKI…DADE).

This sequence belongs to the UPF0053 family.

It localises to the cell membrane. The polypeptide is UPF0053 protein BU323 (Buchnera aphidicola subsp. Acyrthosiphon pisum (strain APS) (Acyrthosiphon pisum symbiotic bacterium)).